We begin with the raw amino-acid sequence, 529 residues long: Listeriolysin O (529 aa).

Positions 1–24 (MKKIMLVFITLILVSLPIAQQTEA) are cleaved as a signal peptide. A disordered region spans residues 35-54 (SISSMAPPASPPASPKTPIE). The next 4 beta stranded transmembrane spans lie at 214–227 (ESQL…AFKA), 234–243 (VNFGAISEGK), 312–321 (STKVKAAFDA), and 329–341 (SGDV…IKNS). The short motif at 483–493 (ECTGLAWEWWR) is the Conserved undecapeptide element. The short motif at 515–516 (TL) is the Cholesterol binding element.

This sequence belongs to the cholesterol-dependent cytolysin family. Homooligomeric pore complex of 35 to 50 subunits; when inserted in the host membrane.

It is found in the secreted. It localises to the host membrane. The protein resides in the host cell membrane. Its activity is regulated as follows. Activity of listeriolysin O is regulated on multiple levels. It should be high in the phagosome, thereby allowing escape of the bacteria from the phagosomal compartment. Then, once inside the host cytosol, the activity must be controlled to prevent lysis of the host plasma membrane and loss of the intracellular environment. A cholesterol-dependent toxin that causes cytolysis by forming pores in cholesterol containing host membranes. After binding to target membranes, the protein undergoes a major conformation change, leading to its insertion in the host membrane and formation of an oligomeric pore complex. Cholesterol is required for binding to host membranes, membrane insertion and pore formation; cholesterol binding is mediated by a Thr-Leu pair in the C-terminus. Acts as a major virulence factor required for the escape of bacteria from phagosomal vacuoles and entry into the host cytosol. Can be reversibly inactivated by oxidation. The chain is Listeriolysin O (hly) from Listeria monocytogenes serotype 1/2a (strain 08-5578).